The primary structure comprises 440 residues: MSLSNKTVKELRQLLKERYTVEDELTESIALSSMRFKPSQEPEFHALSQSSLLKTKLKQQSSTDIPSYTHVLISKLSCEKITHYAVRGGNIEIMGILMGFTLKDNIVVMDCFNLPVVGTETRVNAQLESYEYMVQYIDEMYNHNDGGDGRDYKGAKLNVVGWFHSHPGYDCWLSNIDIQTQDLNQRFQDPYVAIVVDPLKSLEDKILRMGAFRTIESKSDDNSATSYYELETIIFDSELNRALFETKLNLHCVIEDDESEQISLNRLIDSMKQYSYLMDSKNVRTRIKLATTSERVSNENKKNIDYQNRSTRSQFCLNTQRGDSTETSSFGSMFSGDNTSDVDMEDRNLTEFDSTDTSLCINGEPSIHVNRVERSSRSTDNFHNSKKRMNSNQERCHDEGNDMLQRNVLETDYARAKNRILASKIKQYERLRFYKDTFTL.

The MPN domain maps to 71–218; sequence VLISKLSCEK…MGAFRTIESK (148 aa). Zn(2+)-binding residues include His-164, His-166, and Asp-177. The JAMM motif motif lies at 164–177; that stretch reads HSHPGYDCWLSNID. Over residues 319 to 341 the composition is skewed to polar residues; that stretch reads TQRGDSTETSSFGSMFSGDNTSD. Disordered regions lie at residues 319-343 and 375-399; these read TQRG…SDVD and SSRS…CHDE.

It belongs to the peptidase M67A family. CSN5 subfamily. In terms of assembly, component of a COP9 signalosome-like (CSN) complex, composed of at least RRI1/CSN5, CSN9, RRI2/CSN10, PCI8/CSN11, CSN12 and CSI1. Within this complex it probably interacts directly with CSN12. Also interacts with RPN5. A divalent metal cation is required as a cofactor.

Its subcellular location is the cytoplasm. It is found in the nucleus. In terms of biological role, catalytic component of the COP9 signalosome (CSN) complex that acts as an regulator of the ubiquitin (Ubl) conjugation pathway by mediating the deneddylation of the cullin subunit of SCF-type E3 ubiquitin-protein ligase complexes. The CSN complex is involved in the regulation of the mating pheromone response. The protein is COP9 signalosome complex subunit 5 (RRI1) of Saccharomyces cerevisiae (strain ATCC 204508 / S288c) (Baker's yeast).